The primary structure comprises 133 residues: Small ribosomal subunit protein uS8 (133 aa).

It belongs to the universal ribosomal protein uS8 family. In terms of assembly, part of the 30S ribosomal subunit. Contacts proteins S5 and S12.

Functionally, one of the primary rRNA binding proteins, it binds directly to 16S rRNA central domain where it helps coordinate assembly of the platform of the 30S subunit. In Syntrophus aciditrophicus (strain SB), this protein is Small ribosomal subunit protein uS8.